The chain runs to 264 residues: Probable aquaporin TIP3-1 (264 aa).

The next 2 membrane-spanning stretches (helical) occupy residues alanine 28–leucine 48 and glycine 62–valine 82. The short motif at asparagine 90–alanine 92 is the NPA 1 element. 3 helical membrane-spanning segments follow: residues leucine 105–leucine 125, alanine 149–isoleucine 169, and valine 176–glycine 196. The NPA 2 motif lies at asparagine 204–alanine 206. The chain crosses the membrane as a helical span at residues tyrosine 224–isoleucine 244.

The protein belongs to the MIP/aquaporin (TC 1.A.8) family. TIP (TC 1.A.8.10) subfamily. As to expression, expressed in leaves and at lower levels in roots.

Its subcellular location is the vacuole membrane. Aquaporins facilitate the transport of water and small neutral solutes across cell membranes. May be involved in transport from the vacuolar compartment to the cytoplasm. This chain is Probable aquaporin TIP3-1 (TIP3-1), found in Oryza sativa subsp. japonica (Rice).